A 339-amino-acid polypeptide reads, in one-letter code: Alcohol dehydrogenase notN (339 aa).

Zn(2+) is bound by residues Cys-44, His-65, Glu-66, Cys-99, Cys-102, Cys-110, and Cys-152. His-65 provides a ligand contact to an alcohol. NAD(+) contacts are provided by residues 176 to 181 (GLGGLG), 196 to 201 (VAISRG), Lys-204, 263 to 265 (LSF), 287 to 289 (PSG), and 295 to 297 (EDA).

The protein belongs to the zinc-containing alcohol dehydrogenase family. Zn(2+) is required as a cofactor.

The catalysed reaction is a primary alcohol + NAD(+) = an aldehyde + NADH + H(+). The enzyme catalyses a secondary alcohol + NAD(+) = a ketone + NADH + H(+). In terms of biological role, alcohol dehydrogenase; part of the gene cluster that mediates the biosynthesis of notoamide, a fungal indole alkaloid that belongs to a family of natural products containing a characteristic bicyclo[2.2.2]diazaoctane core. The first step of notoamide biosynthesis involves coupling of L-proline and L-tryptophan by the bimodular NRPS notE, to produce cyclo-L-tryptophan-L-proline called brevianamide F. The reverse prenyltransferase notF then acts as a deoxybrevianamide E synthase and converts brevianamide F to deoxybrevianamide E via reverse prenylation at C-2 of the indole ring leading to the bicyclo[2.2.2]diazaoctane core. Deoxybrevianamide E is further hydroxylated at C-6 of the indole ring, likely catalyzed by the cytochrome P450 monooxygenase notG, to yield 6-hydroxy-deoxybrevianamide E. 6-hydroxy-deoxybrevianamide E is a specific substrate of the prenyltransferase notC for normal prenylation at C-7 to produce 6-hydroxy-7-prenyl-deoxybrevianamide, also called notoamide S. As the proposed pivotal branching point in notoamide biosynthesis, notoamide S can be diverted to notoamide E through an oxidative pyran ring closure putatively catalyzed by either notH cytochrome P450 monooxygenase or the notD FAD-linked oxidoreductase. This step would be followed by an indole 2,3-epoxidation-initiated pinacol-like rearrangement catalyzed by the notB FAD-dependent monooxygenase leading to the formation of notoamide C and notoamide D. On the other hand notoamide S is converted to notoamide T by notH (or notD), a bifunctional oxidase that also functions as the intramolecular Diels-Alderase responsible for generation of (+)-notoamide T. To generate antipodal (-)-notoaminide T, notH' (or notD') in Aspergillus versicolor is expected to catalyze a Diels-Alder reaction leading to the opposite stereochemistry. The remaining oxidoreductase notD (or notH) likely catalyzes the oxidative pyran ring formation to yield (+)-stephacidin A. The FAD-dependent monooxygenase notI is highly similar to notB and is predicted to catalyze a similar conversion from (+)-stephacidin A to (-)-notoamide B via the 2,3-epoxidation of (+)-stephacidin A followed by a pinacol-type rearrangement. Finally, it remains unclear which enzyme could be responsible for the final hydroxylation steps leading to notoamide A and sclerotiamide. The function of notN in the notoamide biosynthesis has not been determined yet. The chain is Alcohol dehydrogenase notN from Aspergillus sp. (strain MF297-2).